The following is a 251-amino-acid chain: 1-(5-phosphoribosyl)-5-[(5-phosphoribosylamino)methylideneamino] imidazole-4-carboxamide isomerase (251 aa).

Asp-8 functions as the Proton acceptor in the catalytic mechanism. Asp-131 acts as the Proton donor in catalysis.

The protein belongs to the HisA/HisF family.

It is found in the cytoplasm. It catalyses the reaction 1-(5-phospho-beta-D-ribosyl)-5-[(5-phospho-beta-D-ribosylamino)methylideneamino]imidazole-4-carboxamide = 5-[(5-phospho-1-deoxy-D-ribulos-1-ylimino)methylamino]-1-(5-phospho-beta-D-ribosyl)imidazole-4-carboxamide. The protein operates within amino-acid biosynthesis; L-histidine biosynthesis; L-histidine from 5-phospho-alpha-D-ribose 1-diphosphate: step 4/9. The polypeptide is 1-(5-phosphoribosyl)-5-[(5-phosphoribosylamino)methylideneamino] imidazole-4-carboxamide isomerase (Burkholderia cenocepacia (strain ATCC BAA-245 / DSM 16553 / LMG 16656 / NCTC 13227 / J2315 / CF5610) (Burkholderia cepacia (strain J2315))).